A 293-amino-acid polypeptide reads, in one-letter code: Notch homolog 2 N-terminal-like protein C (293 aa).

4 EGF-like domains span residues 42–81 (PPRMCRDGYEPCVNEGMCVTYHNGTGYCKCPEGFLGEYCQ), 82–120 (HRDPCEKNRCQNGGTCVAQAMLGKATCRCASGFTGEDCQ), 123–161 (TSHPCFVSRPCLNGGTCHMLSRDTYECTCQVGFTGKECQ), and 162–198 (WTDACLSHPCANGSTCTTVANQFSCKCLTGFTGQKCE). 17 disulfides stabilise this stretch: cysteine 46–cysteine 59, cysteine 53–cysteine 69, cysteine 71–cysteine 80, cysteine 86–cysteine 97, cysteine 91–cysteine 108, cysteine 110–cysteine 119, cysteine 127–cysteine 139, cysteine 133–cysteine 149, cysteine 151–cysteine 160, cysteine 166–cysteine 177, cysteine 171–cysteine 186, cysteine 188–cysteine 197, cysteine 204–cysteine 216, cysteine 210–cysteine 225, cysteine 227–cysteine 236, cysteine 243–cysteine 254, and cysteine 248–cysteine 264. Asparagine 64 carries N-linked (GlcNAc...) asparagine glycosylation. Asparagine 173 is a glycosylation site (N-linked (GlcNAc...) asparagine). The EGF-like 5; calcium-binding domain maps to 200–237 (DVNECDIPGHCQHGGTCLNLPGSYQCQCLQGFTGQYCD). The 38-residue stretch at 239-276 (LYVPCAPSPCVNGGTCRQTGDFTFECNCLPETVRRGTE) folds into the EGF-like 6 domain.

This sequence belongs to the NOTCH family. Interacts with NOTCH2. Interacts with DLL1; the interaction is direct. Expressed in radial glia neural stem cells during cortical development.

It is found in the secreted. Functionally, human-specific protein that promotes neural progenitor proliferation and evolutionary expansion of the brain neocortex by regulating the Notch signaling pathway. Able to promote neural progenitor self-renewal, possibly by down-regulating neuronal differentiation genes, thereby delaying the differentiation of neuronal progenitors and leading to an overall final increase in neuronal production. Acts by enhancing the Notch signaling pathway via two different mechanisms that probably work in parallel to reach the same effect. Enhances Notch signaling pathway in a non-cell-autonomous manner via direct interaction with NOTCH2. Also promotes Notch signaling pathway in a cell-autonomous manner through inhibition of cis DLL1-NOTCH2 interactions, which promotes neuronal differentiation. The polypeptide is Notch homolog 2 N-terminal-like protein C (Homo sapiens (Human)).